Consider the following 875-residue polypeptide: MSKSTAEIRQAFLDFFHSKGHQVVASSSLVPNNDPTLLFTNAGMNQFKDVFLGLDKRNYSRATTSQRCVRAGGKHNDLENVGYTARHHTFFEMLGNFSFGDYFKHDAIQFAWELLTGENWFALPKDRLWVTVYETDDEAYEIWEKEVGIPRERIIRIGDNKGAAYASDNFWQMGDTGPCGPCTEIFYDHGDHIWGGPPGSPEEDGDRYIEIWNIVFMQFNRQADGTMEPLPKPSVDTGMGLERIAAVLQHVNSNYEIDLFRTLIEAVAKVTGATDLSNKSLRVIADHIRSCAFLIADGVVPSNENRGYVLRRIIRRAVRHGNMLGAKETFFYKLVGPLIDVMGSAGEELKRQQAQVEQVLKTEEEQFARTLERGLALLDEELAKLSGDTLDGETAFRLYDTYGFPVDLTADVCRERNIKVDEAGFEAAMEEQRRRAREASGFGADYNAMIRVDGASEFKGYDHLELNGKVTALFVDGKAVDAISAGQEAVVVLDQTPFYAESGGQVGDKGELKGAGFAFAVSDTQKYGQAIGHIGTLSTGSLKVGDAVQADVDDARRARIRLNHSATHLMHAALRQILGTHVAQKGSLVNDKVLRFDFSHNEAMKPSEIRAVEDLVNAQIRRNLPVETNIMDLEAAKAKGAMALFGEKYDDRVRVLSMGDFSTELCGGTHASRTGDIGLFRIVSESGTAAGVRRIEAVTGEGAIATLHAESDRLSDIAQLLKGDSQNLGEKVRSVLERTRQLEKELQQLKEQAAAQESANLSSKAVDINGVKLLVSELAGVEPKMLRTMVDDLKNQLGSTVIVLATVAEGKVSLIAGVSKDVTDRVKAGELVGMVAQQVGGKGGGRPDMAQAGGTDAAALPAALASVKGWVSAKL.

Residues His-564, His-568, Cys-666, and His-670 each coordinate Zn(2+).

It belongs to the class-II aminoacyl-tRNA synthetase family. Homotetramer. It depends on Zn(2+) as a cofactor.

It is found in the cytoplasm. It catalyses the reaction tRNA(Ala) + L-alanine + ATP = L-alanyl-tRNA(Ala) + AMP + diphosphate. Catalyzes the attachment of alanine to tRNA(Ala) in a two-step reaction: alanine is first activated by ATP to form Ala-AMP and then transferred to the acceptor end of tRNA(Ala). Also edits incorrectly charged Ser-tRNA(Ala) and Gly-tRNA(Ala) via its editing domain. This Citrobacter koseri (strain ATCC BAA-895 / CDC 4225-83 / SGSC4696) protein is Alanine--tRNA ligase.